The primary structure comprises 355 residues: UDP-galactose translocator 1 (355 aa).

The tract at residues 1–36 is disordered; it reads MKFQNVHISHQDEDKEKLLPNDKDVEKADESPSSSR. Residues 9–30 show a composition bias toward basic and acidic residues; sequence SHQDEDKEKLLPNDKDVEKADE. A run of 6 helical transmembrane segments spans residues 40–60, 177–197, 211–231, 282–302, 309–329, and 330–350; these read VFKC…TLTI, WMAI…NVSA, IVGL…GVYF, VWAV…VMRY, SMAS…IFPD, and IFIG…VLLY.

Belongs to the nucleotide-sugar transporter family. SLC35A subfamily.

It is found in the membrane. The protein resides in the cytoplasmic granule membrane. The sequence is that of UDP-galactose translocator 1 (ugtp-1) from Caenorhabditis elegans.